Here is a 312-residue protein sequence, read N- to C-terminus: uncharacterized protein (312 aa).

Positions 95–119 are disordered; sequence EKRRENPPKLTLPPLPPPAEERKKP.

It is found in the plastid. Its subcellular location is the chloroplast. This is an uncharacterized protein from Chlamydomonas moewusii (Chlamydomonas eugametos).